Reading from the N-terminus, the 323-residue chain is Transcription factor MafB (323 aa).

Lysine 32 participates in a covalent cross-link: Glycyl lysine isopeptide (Lys-Gly) (interchain with G-Cter in SUMO). The span at 34-43 (EPLGRAERPG) shows a compositional bias: basic and acidic residues. Disordered stretches follow at residues 34–78 (EPLG…PTEP) and 116–210 (PVPQ…VEDR). A compositionally biased stretch (low complexity) spans 54 to 77 (SVSSTPLSTPCSSVPSSPSFSPTE). Basic residues-rich tracts occupy residues 129–143 (SAHH…HPHH) and 159–168 (AHPHHHHHHQ). Positions 192–201 (PHATAAATAA) are enriched in low complexity. The basic motif stretch occupies residues 238-263 (RLKQKRRTLKNRGYAQSCRYKRVQQK). The bZIP domain maps to 238-301 (RLKQKRRTLK…DAYKVKCEKL (64 aa)). The tract at residues 266 to 287 (LENEKTQLIQQVEQLKQEVSRL) is leucine-zipper. Residue lysine 297 forms a Glycyl lysine isopeptide (Lys-Gly) (interchain with G-Cter in SUMO) linkage.

Belongs to the bZIP family. Maf subfamily. Homodimer or heterodimer with other bHLH-Zip transcription factors. Forms homodimers and heterodimers with FOS, FOSB and FOSL2, but not with JUN proteins (JUN, JUNB and JUND). Interacts with the intracellular cytoplasmic domain of LRP1 (LRPICD); the interaction results in a moderate reduction of MAFB transcriptional potential. Binds DNA as a homodimer or a heterodimer. Interacts with PAX6; the interaction is direct. Interacts with ETS1 and LRP1. Sumoylated. Sumoylation on Lys-32 and Lys-297 stimulates its transcriptional repression activity and promotes macrophage differentiation from myeloid progenitors. Expressed in pancreatic alpha-cells (glucagon-positive cells), in podocytes of the kidney and macrophages (at protein level). Most abundant in kidney, gut, lung and brain.

The protein localises to the nucleus. In terms of biological role, acts as a transcriptional activator or repressor. Plays a pivotal role in regulating lineage-specific hematopoiesis by repressing ETS1-mediated transcription of erythroid-specific genes in myeloid cells. Required for monocytic, macrophage, osteoclast, podocyte and islet beta cell differentiation. Involved in renal tubule survival and F4/80 maturation. Activates the insulin and glucagon promoters. Together with PAX6, transactivates weakly the glucagon gene promoter through the G1 element. SUMO modification controls its transcriptional activity and ability to specify macrophage fate. Binds element G1 on the glucagon promoter. Involved either as an oncogene or as a tumor suppressor, depending on the cell context. Required for the transcriptional activation of HOXB3 in the rhombomere r5 in the hindbrain. The chain is Transcription factor MafB (Mafb) from Mus musculus (Mouse).